The primary structure comprises 287 residues: Protein-export membrane protein SecF (287 aa).

Transmembrane regions (helical) follow at residues 21–41 (LIAI…FNGL), 129–149 (QIYW…FIIF), 158–178 (VILA…LFGI), 182–202 (LASV…DILL), 226–246 (VTMS…TVFV), and 259–279 (VLII…LGIL).

The protein belongs to the SecD/SecF family. SecF subfamily. As to quaternary structure, part of the protein translocation apparatus. Forms a complex with SecD.

Its subcellular location is the cell membrane. In terms of biological role, involved in protein export. This is Protein-export membrane protein SecF from Methanothermobacter thermautotrophicus (strain ATCC 29096 / DSM 1053 / JCM 10044 / NBRC 100330 / Delta H) (Methanobacterium thermoautotrophicum).